Here is a 289-residue protein sequence, read N- to C-terminus: Rhodopsin (289 aa).

The Extracellular portion of the chain corresponds to 1-7 (YLVNPAA). The chain crosses the membrane as a helical span at residues 8–32 (YAALGAYMFLLILIGFPVNFLTLYV). The Cytoplasmic segment spans residues 33–44 (TIEHKKLRTPLN). Residues 45–67 (YILLNLAVANLFMVLGGFTTTMY) traverse the membrane as a helical segment. Topologically, residues 68 to 81 (TSMHGYFVLGRLGC) are extracellular. A disulfide bond links Cys81 and Cys158. The chain crosses the membrane as a helical span at residues 82–104 (NLEGFFATMGGEIALWSLVVLAI). The 'Ionic lock' involved in activated form stabilization signature appears at 105 to 107 (ERW). At 105 to 123 (ERWIVVCKPISNFRFTEDH) the chain is on the cytoplasmic side. The chain crosses the membrane as a helical span at residues 124–144 (AIMGLAFTWVMALSCAVPPLV). Over 145–173 (GWSRYIPEGMQCSCGVDYYTRAEGFNNES) the chain is Extracellular. Asn171 carries an N-linked (GlcNAc...) asparagine glycan. The chain crosses the membrane as a helical span at residues 174–195 (FVIYMFIVHFLTPLIIISFCYG). Residues 196–223 (RLLCAVKEAAAAQQESETTQRAEREVSR) lie on the Cytoplasmic side of the membrane. A helical membrane pass occupies residues 224–245 (MVVMMVISFLMCWLPYASVAWY). At 246 to 257 (IFCNQGSEFGPI) the chain is on the extracellular side. A helical transmembrane segment spans residues 258–279 (FMTLPAFFAKSSAIYNPLIYIC). Lys267 is modified (N6-(retinylidene)lysine). Residues 280–289 (MNKQFRHCMI) lie on the Cytoplasmic side of the membrane.

It belongs to the G-protein coupled receptor 1 family. Opsin subfamily. Post-translationally, phosphorylated on some or all of the serine and threonine residues present in the C-terminal region. In terms of processing, contains one covalently linked retinal chromophore.

The protein localises to the membrane. Its subcellular location is the cell projection. It is found in the cilium. The protein resides in the photoreceptor outer segment. Its function is as follows. Photoreceptor required for image-forming vision at low light intensity. While most salt water fish species use retinal as chromophore, most freshwater fish use 3-dehydroretinal, or a mixture of retinal and 3-dehydroretinal. Light-induced isomerization of 11-cis to all-trans retinal triggers a conformational change that activates signaling via G-proteins. Subsequent receptor phosphorylation mediates displacement of the bound G-protein alpha subunit by arrestin and terminates signaling. The chain is Rhodopsin (rho) from Cottocomephorus inermis (Longfin Baikal sculpin).